The primary structure comprises 658 residues: MVPRLLLRAWPRGPAVGPGAPSRPLSAGSGPGQYLQRSIVPTMHYQDSLPRLPIPKLEDTIRRYLSAQKPLLNDGQFRKTEQFCKSFENGIGKELHEQLVALDKQNKHTSYISGPWFDMYLSARDSVVLNFNPFMAFNPDPKSEYNDQLTRATNMTVSAIRFLKTLRAGLLEPEVFHLNPAKSDTITFKRLIRFVPSSLSWYGAYLVNAYPLDMSQYFRLFNSTRLPKPSRDELFTDDKARHLLVLRKGNFYIFDVLDQDGNIVSPSEIQAHLKYILSDSSPAPEFPLAYLTSENRDIWAELRQKLMSSGNEESLRKVDSAVFCLCLDDFPIKDLVHLSHNMLHGDGTNRWFDKSFNLIIAKDGSTAVHFEHSWGDGVAVLRFFNEVFKDSTQTPAVTPQSQPATTDSTVTVQKLNFELTDALKTGITAAKEKFDATMKTLTIDCVQFQRGGKEFLKKQKLSPDAVAQLAFQMAFLRQYGQTVATYESCSTAAFKHGRTETIRPASVYTKRCSEAFVREPSRHSAGELQQMMVECSKYHGQLTKEAAMGQGFDRHLFALRHLAAAKGIILPELYLDPAYGQINHNVLSTSTLSSPAVNLGGFAPVVSDGFGVGYAVHDNWIGCNVSSYPGRNAREFLQCVEKALEDMFDALEGKSIKS.

A mitochondrion-targeting transit peptide spans 1–25; the sequence is MVPRLLLRAWPRGPAVGPGAPSRPL. The Mitochondrial matrix portion of the chain corresponds to 26-178; that stretch reads SAGSGPGQYL…GLLEPEVFHL (153 aa). An N6-succinyllysine modification is found at Lys-69. N6-acetyllysine is present on Lys-79. An N6-succinyllysine modification is found at Lys-85. The segment at residues 179–208 is an intramembrane region (note=Mitochondrial inner membrane); the sequence is NPAKSDTITFKRLIRFVPSSLSWYGAYLVN. At 209 to 658 the chain is on the mitochondrial matrix side; the sequence is AYPLDMSQYF…DALEGKSIKS (450 aa). N6-acetyllysine; alternate is present on Lys-239. The residue at position 239 (Lys-239) is an N6-succinyllysine; alternate. Lys-305 is subject to N6-acetyllysine. His-372 acts as the Proton acceptor in catalysis. An N6-succinyllysine mark is found at Lys-424 and Lys-439. 452–464 provides a ligand contact to CoA; that stretch reads GKEFLKKQKLSPD. The (R)-carnitine site is built by Tyr-486, Ser-488, and Thr-499. Lys-510 and Lys-544 each carry N6-acetyllysine; alternate. Lys-510 and Lys-544 each carry N6-succinyllysine; alternate.

This sequence belongs to the carnitine/choline acetyltransferase family.

The protein localises to the mitochondrion inner membrane. The enzyme catalyses (R)-carnitine + hexadecanoyl-CoA = O-hexadecanoyl-(R)-carnitine + CoA. It carries out the reaction octanoyl-CoA + (R)-carnitine = O-octanoyl-(R)-carnitine + CoA. The catalysed reaction is decanoyl-CoA + (R)-carnitine = O-decanoyl-(R)-carnitine + CoA. It catalyses the reaction dodecanoyl-CoA + (R)-carnitine = O-dodecanoyl-R-carnitine + CoA. The enzyme catalyses tetradecanoyl-CoA + (R)-carnitine = O-tetradecanoyl-(R)-carnitine + CoA. It carries out the reaction (R)-carnitine + octadecanoyl-CoA = O-octadecanoyl-(R)-carnitine + CoA. The catalysed reaction is eicosanoyl-CoA + (R)-carnitine = O-eicosanoyl-(R)-carnitine + CoA. It catalyses the reaction (9Z)-tetradecenoyl-CoA + (R)-carnitine = O-(9Z)-tetradecenoyl-(R)-carnitine + CoA. The enzyme catalyses (5Z)-tetradecenoyl-CoA + (R)-carnitine = O-(5Z)-tetradecenoyl-(R)-carnitine + CoA. It carries out the reaction (R)-carnitine + (9Z)-octadecenoyl-CoA = O-(9Z)-octadecenoyl-(R)-carnitine + CoA. The catalysed reaction is 4,8-dimethylnonanoyl-CoA + (R)-carnitine = O-4,8-dimethylnonanoyl-(R)-carnitine + CoA. Its pathway is lipid metabolism; fatty acid beta-oxidation. With respect to regulation, inhibited by trans-2-hexadecanoyl-CoA. Functionally, involved in the intramitochondrial synthesis of acylcarnitines from accumulated acyl-CoA metabolites. Reconverts acylcarnitines back into the respective acyl-CoA esters that can then undergo beta-oxidation, an essential step for the mitochondrial uptake of long-chain fatty acids and their subsequent beta-oxidation in the mitochondrion. Active with medium (C8-C12) and long-chain (C14-C18) acyl-CoA esters. The polypeptide is Carnitine O-palmitoyltransferase 2, mitochondrial (Homo sapiens (Human)).